The sequence spans 359 residues: Stearoyl-CoA desaturase (359 aa).

Residues 1–72 (MPAHLLQEEI…EGPKPKLEYV (72 aa)) are Cytoplasmic-facing. The helical transmembrane segment at 73–93 (WRNIILMSLLHLGALYGITLI) threads the bilayer. Asn-75 contributes to the substrate binding site. The Lumenal portion of the chain corresponds to 94–97 (PTCK). A helical membrane pass occupies residues 98–118 (IYTYIWVLFYYLMGALGITAG). At 119 to 217 (AHRLWSHRTY…EKLVMFQRRY (99 aa)) the chain is on the cytoplasmic side. Residues His-120 and His-125 each coordinate Fe cation. Positions 120–125 (HRLWSH) match the Histidine box-1 motif. The substrate site is built by Asn-148, Arg-155, and Asp-156. Fe cation is bound by residues His-157, His-160, and His-161. A Histidine box-2 motif is present at residues 157 to 161 (HRAHH). Substrate-binding residues include Arg-188 and Lys-189. Residues Ser-198 and Ser-203 each carry the phosphoserine modification. Residues 218 to 237 (YKPGVLLLCFILPTLVPWYL) form a helical membrane-spanning segment. Residues 238-241 (WDET) lie on the Lumenal side of the membrane. The chain crosses the membrane as a helical span at residues 242 to 263 (FQNSLFFATLFRYALGLNVTWL). Residue Trp-262 coordinates substrate. Residues 264–359 (VNSAAHMYGY…RTGEESYKSG (96 aa)) lie on the Cytoplasmic side of the membrane. Positions 269, 298, 301, and 302 each coordinate Fe cation. Residues 298–302 (HNYHH) carry the Histidine box-3 motif.

Belongs to the fatty acid desaturase type 1 family. Requires Fe(2+) as cofactor.

Its subcellular location is the endoplasmic reticulum membrane. It catalyses the reaction octadecanoyl-CoA + 2 Fe(II)-[cytochrome b5] + O2 + 2 H(+) = (9Z)-octadecenoyl-CoA + 2 Fe(III)-[cytochrome b5] + 2 H2O. The enzyme catalyses hexadecanoyl-CoA + 2 Fe(II)-[cytochrome b5] + O2 + 2 H(+) = (9Z)-hexadecenoyl-CoA + 2 Fe(III)-[cytochrome b5] + 2 H2O. Stearoyl-CoA desaturase that utilizes O(2) and electrons from reduced cytochrome b5 to introduce the first double bond into saturated fatty acyl-CoA substrates. Catalyzes the insertion of a cis double bond at the delta-9 position into fatty acyl-CoA substrates including palmitoyl-CoA and stearoyl-CoA. Gives rise to a mixture of 16:1 and 18:1 unsaturated fatty acids. Plays an important role in lipid biosynthesis. Plays an important role in regulating the expression of genes that are involved in lipogenesis and in regulating mitochondrial fatty acid oxidation. Plays an important role in body energy homeostasis. Contributes to the biosynthesis of membrane phospholipids, cholesterol esters and triglycerides. The sequence is that of Stearoyl-CoA desaturase (SCD) from Bos taurus (Bovine).